The following is a 309-amino-acid chain: MDPSQNPRDLCQIYLEKFMVISNYRSLSFKKQKYLVIDKLSNYNNTDYRDVLQVNGYFTYCVQKNKLDAIQYLYENNLMNPENKSQLFKIAIVHGNIDVLKLVIDYGIDVSLDDHFAITVCTRPISNTENIIQLLIDNGADVTSNNNLPIKFAILKGTINKSVLDLLINNGADIHADEYFCAKYAAKCCYIFALKYIINLGIDVNMENGILLKNVLSDTAYSSNEYTYSCIKTLLENGADISFLDDNDTLKMCRGSKTRNILILLLDYGFDISFINEYQVKDSSKLSEINKILDQGIDPIKFILFTNEI.

ANK repeat units lie at residues 53–82, 83–112, 114–144, 145–176, 177–206, 214–243, and 245–274; these read QVNG…MNPE, NKSQ…DVSL, DHFA…DVTS, NNNL…DIHA, DEYF…DVNM, NVLS…DISF, and DDND…DISF.

This chain is Putative ankyrin repeat protein R603, found in Acanthamoeba polyphaga (Amoeba).